A 163-amino-acid polypeptide reads, in one-letter code: NADPH-dependent 7-cyano-7-deazaguanine reductase (163 aa).

Catalysis depends on Cys-54, which acts as the Thioimide intermediate. Catalysis depends on Asp-61, which acts as the Proton donor. Substrate is bound by residues 76 to 78 and 95 to 96; these read VES and HE.

This sequence belongs to the GTP cyclohydrolase I family. QueF type 1 subfamily.

Its subcellular location is the cytoplasm. It carries out the reaction 7-aminomethyl-7-carbaguanine + 2 NADP(+) = 7-cyano-7-deazaguanine + 2 NADPH + 3 H(+). It participates in tRNA modification; tRNA-queuosine biosynthesis. Functionally, catalyzes the NADPH-dependent reduction of 7-cyano-7-deazaguanine (preQ0) to 7-aminomethyl-7-deazaguanine (preQ1). This is NADPH-dependent 7-cyano-7-deazaguanine reductase from Streptococcus thermophilus (strain CNRZ 1066).